The sequence spans 431 residues: 5-methylthioadenosine/S-adenosylhomocysteine deaminase (431 aa).

Residues His68 and His70 each contribute to the Zn(2+) site. The substrate site is built by Glu97 and His186. His213 provides a ligand contact to Zn(2+). Residues Glu216 and Asp301 each contribute to the substrate site. Asp301 provides a ligand contact to Zn(2+).

It belongs to the metallo-dependent hydrolases superfamily. MTA/SAH deaminase family. Zn(2+) serves as cofactor.

The catalysed reaction is S-adenosyl-L-homocysteine + H2O + H(+) = S-inosyl-L-homocysteine + NH4(+). It carries out the reaction S-methyl-5'-thioadenosine + H2O + H(+) = S-methyl-5'-thioinosine + NH4(+). In terms of biological role, catalyzes the deamination of 5-methylthioadenosine and S-adenosyl-L-homocysteine into 5-methylthioinosine and S-inosyl-L-homocysteine, respectively. Is also able to deaminate adenosine. This chain is 5-methylthioadenosine/S-adenosylhomocysteine deaminase, found in Halothermothrix orenii (strain H 168 / OCM 544 / DSM 9562).